The chain runs to 177 residues: Calcineurin subunit B (177 aa).

EF-hand domains lie at 25 to 60 (KEIKKLYKRFKKLDKDGNGTISKDEFLMIPELAVNP), 62 to 92 (VKRVISIFDENGDGSVNFKEFIAALSVFNAQ), 94 to 129 (DKQRKLEFAFKVYDIDGDGYISNGELFTVLKMMVGN), and 135 to 170 (QLQQIVDKTILEADEDGDGKISFEEFAKTLSHQDLE). Ca(2+)-binding residues include aspartate 38, aspartate 40, asparagine 42, threonine 44, glutamate 49, aspartate 70, asparagine 72, aspartate 74, serine 76, glutamate 81, aspartate 107, aspartate 109, aspartate 111, tyrosine 113, glutamate 118, aspartate 148, aspartate 150, aspartate 152, lysine 154, and glutamate 159.

Belongs to the calcineurin regulatory subunit family. Composed of a catalytic subunit (A) and a regulatory subunit (B).

Regulatory subunit of calcineurin, a calcium-dependent, calmodulin stimulated protein phosphatase. Confers calcium sensitivity. This chain is Calcineurin subunit B (CNB1), found in Naegleria gruberi (Amoeba).